We begin with the raw amino-acid sequence, 346 residues long: MNLNFKVPTWDFIMTDPSSPKLCGQKGSSKNGSPKTSSPKSGSPRACSPKLKHKNNQQLLQNDSINLSSSPSSPSSPSSPPMVGKVTVKKTHTKSSVVPSNSNGNNSPVLKVSQYQVPQNGSSPVLSPVSLIPIQDLNSPNVGYKLELEQRLHKRQLQKRLEKQIQDSEKEKQDQLLIQQQQIQQQQQQIQQQQQQIQLLLNNQNNQNQNQNQNQNQIQNNNIKNGMKLVSIPTPHPNFNNINNINNNNNNNNNNNNSYNGNIETNTPISLPPPICNKYKNNYPSCDVLFKSSLSSSSSASPFSLTPTSQSPILSSPLFHNVPSVESHFINNDSFLQLPPIRDEIF.

The interval 10–109 (WDFIMTDPSS…SNSNGNNSPV (100 aa)) is disordered. Over residues 26–44 (KGSSKNGSPKTSSPKSGSP) the composition is skewed to low complexity. The span at 56–67 (NQQLLQNDSINL) shows a compositional bias: polar residues. Residues 94–109 (KSSVVPSNSNGNNSPV) are compositionally biased toward low complexity.

This is an uncharacterized protein from Dictyostelium discoideum (Social amoeba).